A 204-amino-acid polypeptide reads, in one-letter code: Heart- and neural crest derivatives-expressed protein 1 (204 aa).

3 disordered regions span residues 1-24, 57-115, and 172-204; these read MNLVGSYAHHHHHHHHHHHPHPAH, APDF…RTES, and LKKADGGRESKRKRELQQHEGFPPALGPGEKRD. 2 stretches are compositionally biased toward basic residues: residues 8–22 and 98–110; these read AHHHHHHHHHHHPHP and LGRRKGSGPKKER. The bHLH domain occupies 100 to 152; the sequence is RRKGSGPKKERRRTESINSAFAELRECIPNVPADTKLSKIKTLRLATSYIAYL. The residue at position 113 (Thr-113) is a Phosphothreonine; by PLK4. Ser-115 is modified (phosphoserine; by PLK4).

As to quaternary structure, efficient DNA binding requires dimerization with another bHLH protein. Forms homodimers and heterodimers with TCF3 gene products E12 and E47, HAND2 and HEY1, HEY2 and HEYL (hairy-related transcription factors). Interacts with MDFIC. Interacts with SOX15; the interaction enhances HAND1-induced differentiation of trophoblast giant cells. Phosphorylation by PLK4 disrupts the interaction with MDFIC and leads to translocation into the nucleoplasm, allowing dimerization and transcription factor activity.

Its subcellular location is the nucleus. The protein localises to the nucleoplasm. It localises to the nucleolus. In terms of biological role, transcription factor that plays an essential role in both trophoblast giant cell differentiation and in cardiac morphogenesis. Binds the DNA sequence 5'-NRTCTG-3' (non-canonical E-box). Acts as a transcriptional repressor of SOX15. In the adult, could be required for ongoing expression of cardiac-specific genes. This is Heart- and neural crest derivatives-expressed protein 1 (HAND1) from Ovis aries (Sheep).